A 725-amino-acid polypeptide reads, in one-letter code: Catalase-peroxidase (725 aa).

Residues 90-213 constitute a cross-link (tryptophyl-tyrosyl-methioninium (Trp-Tyr) (with M-239)); it reads WHSAGTYRTG…LAAVQMGLIY (124 aa). Histidine 91 functions as the Proton acceptor in the catalytic mechanism. Residues 213-239 constitute a cross-link (tryptophyl-tyrosyl-methioninium (Tyr-Met) (with W-90)); that stretch reads YVNPEGPNGNPDPVAAAKDIRETFARM. Histidine 254 lines the heme b pocket.

This sequence belongs to the peroxidase family. Peroxidase/catalase subfamily. Homodimer or homotetramer. Heme b is required as a cofactor. In terms of processing, formation of the three residue Trp-Tyr-Met cross-link is important for the catalase, but not the peroxidase activity of the enzyme.

The enzyme catalyses H2O2 + AH2 = A + 2 H2O. It catalyses the reaction 2 H2O2 = O2 + 2 H2O. Its function is as follows. Bifunctional enzyme with both catalase and broad-spectrum peroxidase activity. This Hahella chejuensis (strain KCTC 2396) protein is Catalase-peroxidase.